We begin with the raw amino-acid sequence, 219 residues long: Orotate phosphoribosyltransferase (219 aa).

Lys-26 provides a ligand contact to 5-phospho-alpha-D-ribose 1-diphosphate. Residue 34-35 (FF) participates in orotate binding. 5-phospho-alpha-D-ribose 1-diphosphate-binding positions include 72-73 (YK), Arg-98, Lys-99, Lys-102, His-104, and 124-132 (DDVITAGTA). Residues Thr-128 and Arg-156 each contribute to the orotate site.

It belongs to the purine/pyrimidine phosphoribosyltransferase family. PyrE subfamily. As to quaternary structure, homodimer. It depends on Mg(2+) as a cofactor.

It catalyses the reaction orotidine 5'-phosphate + diphosphate = orotate + 5-phospho-alpha-D-ribose 1-diphosphate. Its pathway is pyrimidine metabolism; UMP biosynthesis via de novo pathway; UMP from orotate: step 1/2. Functionally, catalyzes the transfer of a ribosyl phosphate group from 5-phosphoribose 1-diphosphate to orotate, leading to the formation of orotidine monophosphate (OMP). The polypeptide is Orotate phosphoribosyltransferase (Stenotrophomonas maltophilia (strain K279a)).